We begin with the raw amino-acid sequence, 298 residues long: Probable deoxyhypusine synthase 2 (298 aa).

Lys259 serves as the catalytic Nucleophile.

This sequence belongs to the deoxyhypusine synthase family. Requires NAD(+) as cofactor.

The catalysed reaction is [eIF5A protein]-L-lysine + spermidine = [eIF5A protein]-deoxyhypusine + propane-1,3-diamine. The protein operates within protein modification; eIF5A hypusination. In terms of biological role, catalyzes the NAD-dependent oxidative cleavage of spermidine and the subsequent transfer of the butylamine moiety of spermidine to the epsilon-amino group of a specific lysine residue of the eIF-5A precursor protein to form the intermediate deoxyhypusine residue. The sequence is that of Probable deoxyhypusine synthase 2 (dys2) from Archaeoglobus fulgidus (strain ATCC 49558 / DSM 4304 / JCM 9628 / NBRC 100126 / VC-16).